The primary structure comprises 694 residues: Elongation factor G (694 aa).

The 280-residue stretch at 8–287 folds into the tr-type G domain; it reads EDYRNFGIMA…AVVEFLPAPT (280 aa). GTP is bound by residues 17–24, 86–90, and 140–143; these read AHIDAGKT, DTPGH, and NKMD.

Belongs to the TRAFAC class translation factor GTPase superfamily. Classic translation factor GTPase family. EF-G/EF-2 subfamily.

Its subcellular location is the cytoplasm. Catalyzes the GTP-dependent ribosomal translocation step during translation elongation. During this step, the ribosome changes from the pre-translocational (PRE) to the post-translocational (POST) state as the newly formed A-site-bound peptidyl-tRNA and P-site-bound deacylated tRNA move to the P and E sites, respectively. Catalyzes the coordinated movement of the two tRNA molecules, the mRNA and conformational changes in the ribosome. This Brucella melitensis biotype 1 (strain ATCC 23456 / CCUG 17765 / NCTC 10094 / 16M) protein is Elongation factor G.